The sequence spans 207 residues: Small ribosomal subunit protein uS4 (207 aa).

The tract at residues 31–51 (KCKLDSKPGQHGRTSGARTSD) is disordered. An S4 RNA-binding domain is found at 97–162 (SRLDNVVYRM…QGRIRESLDL (66 aa)).

It belongs to the universal ribosomal protein uS4 family. In terms of assembly, part of the 30S ribosomal subunit. Contacts protein S5. The interaction surface between S4 and S5 is involved in control of translational fidelity.

One of the primary rRNA binding proteins, it binds directly to 16S rRNA where it nucleates assembly of the body of the 30S subunit. Functionally, with S5 and S12 plays an important role in translational accuracy. The protein is Small ribosomal subunit protein uS4 of Bordetella bronchiseptica (strain ATCC BAA-588 / NCTC 13252 / RB50) (Alcaligenes bronchisepticus).